The following is a 598-amino-acid chain: Glutamine--fructose-6-phosphate aminotransferase [isomerizing] (598 aa).

Cys2 acts as the Nucleophile; for GATase activity in catalysis. Residues 2–218 form the Glutamine amidotransferase type-2 domain; it reads CGIVGYIGNN…DLSLGYASKD (217 aa). SIS domains are found at residues 277–421 and 450–588; these read VFDE…KRNL and LSKR…VDMP. Lys593 acts as the For Fru-6P isomerization activity in catalysis.

As to quaternary structure, homodimer.

It localises to the cytoplasm. The catalysed reaction is D-fructose 6-phosphate + L-glutamine = D-glucosamine 6-phosphate + L-glutamate. Its function is as follows. Catalyzes the first step in hexosamine metabolism, converting fructose-6P into glucosamine-6P using glutamine as a nitrogen source. The sequence is that of Glutamine--fructose-6-phosphate aminotransferase [isomerizing] from Campylobacter jejuni subsp. jejuni serotype O:2 (strain ATCC 700819 / NCTC 11168).